Here is a 176-residue protein sequence, read N- to C-terminus: RNA pyrophosphohydrolase (176 aa).

The Nudix hydrolase domain maps to 6–149 (GYRPNVGIVI…KRDVYRRVMK (144 aa)). A Nudix box motif is present at residues 38–59 (GGINPGESAEQAMYRELFEEVG).

It belongs to the Nudix hydrolase family. RppH subfamily. It depends on a divalent metal cation as a cofactor.

Its function is as follows. Accelerates the degradation of transcripts by removing pyrophosphate from the 5'-end of triphosphorylated RNA, leading to a more labile monophosphorylated state that can stimulate subsequent ribonuclease cleavage. The protein is RNA pyrophosphohydrolase of Salmonella arizonae (strain ATCC BAA-731 / CDC346-86 / RSK2980).